Consider the following 304-residue polypeptide: MSEPLNLHRLTTESRNSQTVEIHKANTLGILKMINNEDMKVAAAVQEVLPDIKTAVDCAYESFQNGGRLIYTGAGTSGRLGVMDAVECPPTYSVSPDQVIGIMAGGPEAFLQAAEGIEDSEEAGAEDLRNIQLTSNDTVIAIAASGRTPYAAGALRYARKVGAHTIALTCNENSAISKDADHSIEVVVGPEAITGSTRMKAATAHKMILNMISTAVMVKIGKVYENLMVDVNVSNKKLKERAISIIQSLTNASYDTARYTLEQADHHVKTAIVMLKTSTDQKQAQTLLDEANGFIDKAIEHYHP.

Phosphoserine is present on Ser-2. Residues 59-222 (AYESFQNGGR…STAVMVKIGK (164 aa)) enclose the SIS domain. Catalysis depends on Glu-87, which acts as the Proton donor. Glu-118 is a catalytic residue.

It belongs to the GCKR-like family. MurNAc-6-P etherase subfamily. Homodimer.

It carries out the reaction N-acetyl-D-muramate 6-phosphate + H2O = N-acetyl-D-glucosamine 6-phosphate + (R)-lactate. It participates in amino-sugar metabolism; N-acetylmuramate degradation. Specifically catalyzes the cleavage of the D-lactyl ether substituent of MurNAc 6-phosphate, producing GlcNAc 6-phosphate and D-lactate. The chain is N-acetylmuramic acid 6-phosphate etherase from Bacillus subtilis (strain 168).